Here is a 484-residue protein sequence, read N- to C-terminus: Phosphoenolpyruvate carboxylase (484 aa).

The protein belongs to the PEPCase type 2 family. In terms of assembly, homotetramer. Requires Mg(2+) as cofactor.

The catalysed reaction is oxaloacetate + phosphate = phosphoenolpyruvate + hydrogencarbonate. Functionally, catalyzes the irreversible beta-carboxylation of phosphoenolpyruvate (PEP) to form oxaloacetate (OAA), a four-carbon dicarboxylic acid source for the tricarboxylic acid cycle. This is Phosphoenolpyruvate carboxylase from Methanospirillum hungatei JF-1 (strain ATCC 27890 / DSM 864 / NBRC 100397 / JF-1).